Consider the following 358-residue polypeptide: tRNA-specific 2-thiouridylase MnmA (358 aa).

ATP contacts are provided by residues 6–13 (LVSGGVDS) and Ile32. The segment at 93–95 (NPD) is interaction with target base in tRNA. Cys98 functions as the Nucleophile in the catalytic mechanism. Residues Cys98 and Cys193 are joined by a disulfide bond. Gly121 contributes to the ATP binding site. The interaction with tRNA stretch occupies residues 143–145 (KDQ). The Cysteine persulfide intermediate role is filled by Cys193.

The protein belongs to the MnmA/TRMU family.

It localises to the cytoplasm. The enzyme catalyses S-sulfanyl-L-cysteinyl-[protein] + uridine(34) in tRNA + AH2 + ATP = 2-thiouridine(34) in tRNA + L-cysteinyl-[protein] + A + AMP + diphosphate + H(+). Functionally, catalyzes the 2-thiolation of uridine at the wobble position (U34) of tRNA, leading to the formation of s(2)U34. This Parabacteroides distasonis (strain ATCC 8503 / DSM 20701 / CIP 104284 / JCM 5825 / NCTC 11152) protein is tRNA-specific 2-thiouridylase MnmA.